Here is a 29-residue protein sequence, read N- to C-terminus: Cyclotide mela-3 (29 aa).

A cross-link (cyclopeptide (Gly-Asp)) is located at residues 1 to 29; sequence GKPICGETCFKGKCYTPGCTCSYPICKKD. 3 disulfides stabilise this stretch: Cys5/Cys19, Cys9/Cys21, and Cys14/Cys26.

This is a cyclic peptide. In terms of processing, contains 3 disulfide bonds.

In terms of biological role, probably participates in a plant defense mechanism (Potential). Binds to and induces leakage in phospholipd membranes, particularly ones containing 1-palmitoyl-2-oleophosphatidylethanolamine (POPE). In vitro, displays cytotoxicity against cultured cells. Not active against Gram-negative bacterium E.coli ATCC 25922 or Gram-positive bacterium S.aureus ATCC 25923 up to a concentration of 64 uM. This is Cyclotide mela-3 from Melicytus latifolius (Norfolk Island mahoe).